We begin with the raw amino-acid sequence, 286 residues long: Bifunctional protein FolD (286 aa).

NADP(+)-binding positions include 165 to 167 (GRS) and Ser-190.

Belongs to the tetrahydrofolate dehydrogenase/cyclohydrolase family. As to quaternary structure, homodimer.

The enzyme catalyses (6R)-5,10-methylene-5,6,7,8-tetrahydrofolate + NADP(+) = (6R)-5,10-methenyltetrahydrofolate + NADPH. It catalyses the reaction (6R)-5,10-methenyltetrahydrofolate + H2O = (6R)-10-formyltetrahydrofolate + H(+). The protein operates within one-carbon metabolism; tetrahydrofolate interconversion. Functionally, catalyzes the oxidation of 5,10-methylenetetrahydrofolate to 5,10-methenyltetrahydrofolate and then the hydrolysis of 5,10-methenyltetrahydrofolate to 10-formyltetrahydrofolate. This chain is Bifunctional protein FolD, found in Paraburkholderia xenovorans (strain LB400).